We begin with the raw amino-acid sequence, 281 residues long: NAD kinase (281 aa).

Asp-61 acts as the Proton acceptor in catalysis. Residues 61–62, 134–135, Arg-145, Asp-164, 175–180, and Gln-234 each bind NAD(+); these read DG, ND, and TAYSLS.

It belongs to the NAD kinase family. A divalent metal cation is required as a cofactor.

Its subcellular location is the cytoplasm. It carries out the reaction NAD(+) + ATP = ADP + NADP(+) + H(+). Its function is as follows. Involved in the regulation of the intracellular balance of NAD and NADP, and is a key enzyme in the biosynthesis of NADP. Catalyzes specifically the phosphorylation on 2'-hydroxyl of the adenosine moiety of NAD to yield NADP. The chain is NAD kinase from Clostridium botulinum (strain Loch Maree / Type A3).